The chain runs to 881 residues: Band 4.1-like protein 1 (881 aa).

Position 1 is an N-acetylmethionine (methionine 1). Residues methionine 1 to glutamine 88 are disordered. Low complexity predominate over residues glutamate 17–alanine 35. Threonine 30 is modified (phosphothreonine). Residues glycine 38–serine 50 show a composition bias toward basic and acidic residues. Serine 75 bears the Phosphoserine mark. Residues glutamate 76 to proline 87 show a composition bias toward polar residues. Threonine 79 bears the Phosphothreonine mark. One can recognise an FERM domain in the interval alanine 97–serine 378. The residue at position 343 (tyrosine 343) is a Phosphotyrosine. A phosphoserine mark is found at serine 378, serine 430, and serine 437. Residues serine 428–glutamate 501 are disordered. Basic and acidic residues predominate over residues glutamate 444–glutamate 457. Phosphoserine occurs at positions 461 and 466. Residues serine 466–glutamate 501 are compositionally biased toward basic and acidic residues. Threonine 475 carries the phosphothreonine modification. Residues lysine 483–serine 541 form a spectrin--actin-binding region. Serine 510 is subject to Phosphoserine. The span at leucine 514 to leucine 538 shows a compositional bias: basic and acidic residues. The interval leucine 514–aspartate 596 is disordered. Residues serine 540, serine 541, serine 544, and serine 546 each carry the phosphoserine modification. Threonine 550 bears the Phosphothreonine mark. The segment covering threonine 550–glutamate 577 has biased composition (basic and acidic residues). 2 positions are modified to phosphoserine: serine 564 and serine 578. Threonine 580 is modified (phosphothreonine). Serine 639, serine 648, serine 650, serine 667, serine 672, serine 678, and serine 685 each carry phosphoserine. The disordered stretch occupies residues glutamate 642–threonine 699. Threonine 686 is subject to Phosphothreonine. Phosphoserine is present on residues serine 722, serine 784, and serine 870. Positions serine 746–serine 881 are C-terminal (CTD).

In terms of assembly, interacts with AGAP2. As to expression, highest expression in brain, lower in heart, kidney, pancreas, placenta, lung and skeletal muscle.

Its subcellular location is the cytoplasm. It localises to the cytoskeleton. May function to confer stability and plasticity to neuronal membrane via multiple interactions, including the spectrin-actin-based cytoskeleton, integral membrane channels and membrane-associated guanylate kinases. The sequence is that of Band 4.1-like protein 1 from Homo sapiens (Human).